Reading from the N-terminus, the 182-residue chain is RFKKIRRLGALPGFTSKRPRSGSDLKNPLRSGKRSQYRIRLEEKQKLRFHYGLTERQLLRYVQIARKAKGSTGQVLLQLLEMRLDNILFRLGMASTIPGARQLVNHRHILVNGRIVDIPSYRCKPRDIITTKDKQRSKALIQNSIASAPREELPNHLTIDSFQYKGLVNQIIDSKWIGLKIN.

The disordered stretch occupies residues 12–31; it reads PGFTSKRPRSGSDLKNPLRS. In terms of domain architecture, S4 RNA-binding spans 82–143; the sequence is MRLDNILFRL…KQRSKALIQN (62 aa).

Belongs to the universal ribosomal protein uS4 family. In terms of assembly, part of the 30S ribosomal subunit. Contacts protein S5. The interaction surface between S4 and S5 is involved in control of translational fidelity.

The protein resides in the plastid. The protein localises to the chloroplast. Its function is as follows. One of the primary rRNA binding proteins, it binds directly to 16S rRNA where it nucleates assembly of the body of the 30S subunit. Functionally, with S5 and S12 plays an important role in translational accuracy. The chain is Small ribosomal subunit protein uS4c (rps4) from Hymenocallis littoralis (Beach spider-lily).